We begin with the raw amino-acid sequence, 729 residues long: Cellulose synthase-like protein E1 (729 aa).

2 consecutive transmembrane segments (helical) span residues 29-49 (VIAYRFFSASVFVCICLIWFY) and 64-84 (LIWFVMFIVEIWFGLYWVVTQ). Catalysis depends on residues Asp152 and Asp443. 5 helical membrane passes run 526-546 (LPVLIYSVLTSLCLFKGIPLF), 553-573 (WFIPFGYVTVAATAYSLAEFL), 644-664 (MFLVLGTLGMLNLFCFAAAVA), 680-700 (QFVITGVLVVINWPLYKGMLL), and 709-729 (MSVTVKSVVLALSACTCLAFL).

This sequence belongs to the glycosyltransferase 2 family. Plant cellulose synthase-like E subfamily.

It is found in the golgi apparatus membrane. In terms of biological role, thought to be a Golgi-localized beta-glycan synthase that polymerize the backbones of noncellulosic polysaccharides (hemicelluloses) of plant cell wall. The protein is Cellulose synthase-like protein E1 (CSLE1) of Arabidopsis thaliana (Mouse-ear cress).